Consider the following 335-residue polypeptide: Phospho-N-acetylmuramoyl-pentapeptide-transferase (335 aa).

10 helical membrane-spanning segments follow: residues 3–23, 53–73, 78–98, 118–138, 143–163, 174–194, 200–220, 226–246, 251–271, and 314–334; these read LTILAGLIAFAVTALAMPHFI, GGTVFLLVATSLSFVFALVYF, SLGLISGILLIVLIYGIIGFL, FTLQIVGGLVFYVIHVMPSGI, VFGYHWHLGFLYLCFVLFWVV, GIDGLASVSVVISLLAYGVIA, FDVLLLIGIMVGALLAFFLFN, IFMGDVGSLALGAMLAAISIA, WTLLVIGIVYVLETSSVMLQV, and VDAFLWALGLVASLIVLAILY.

This sequence belongs to the glycosyltransferase 4 family. MraY subfamily. Mg(2+) serves as cofactor.

It is found in the cell membrane. The catalysed reaction is UDP-N-acetyl-alpha-D-muramoyl-L-alanyl-gamma-D-glutamyl-L-lysyl-D-alanyl-D-alanine + di-trans,octa-cis-undecaprenyl phosphate = Mur2Ac(oyl-L-Ala-gamma-D-Glu-L-Lys-D-Ala-D-Ala)-di-trans,octa-cis-undecaprenyl diphosphate + UMP. It participates in cell wall biogenesis; peptidoglycan biosynthesis. Catalyzes the initial step of the lipid cycle reactions in the biosynthesis of the cell wall peptidoglycan: transfers peptidoglycan precursor phospho-MurNAc-pentapeptide from UDP-MurNAc-pentapeptide onto the lipid carrier undecaprenyl phosphate, yielding undecaprenyl-pyrophosphoryl-MurNAc-pentapeptide, known as lipid I. This chain is Phospho-N-acetylmuramoyl-pentapeptide-transferase, found in Streptococcus equi subsp. zooepidemicus (strain MGCS10565).